The chain runs to 237 residues: Small ribosomal subunit protein uS3 (237 aa).

Positions 39 to 107 (VRQFLTKELK…PAQINISEVR (69 aa)) constitute a KH type-2 domain.

Belongs to the universal ribosomal protein uS3 family. As to quaternary structure, part of the 30S ribosomal subunit. Forms a tight complex with proteins S10 and S14.

Binds the lower part of the 30S subunit head. Binds mRNA in the 70S ribosome, positioning it for translation. The polypeptide is Small ribosomal subunit protein uS3 (Aeromonas hydrophila subsp. hydrophila (strain ATCC 7966 / DSM 30187 / BCRC 13018 / CCUG 14551 / JCM 1027 / KCTC 2358 / NCIMB 9240 / NCTC 8049)).